Here is a 491-residue protein sequence, read N- to C-terminus: FAD-dependent monooxygenase idtM (491 aa).

FAD-binding residues include E34, G48, R107, D307, and A320. Residues 448 to 468 traverse the membrane as a helical segment; that stretch reads ILSLVYVVAGLAMMYMSIYLV.

This sequence belongs to the paxM FAD-dependent monooxygenase family. FAD is required as a cofactor.

The protein localises to the membrane. It participates in secondary metabolite biosynthesis. FAD-dependent monooxygenase; part of the gene cluster that mediates the biosynthesis of paspalitrems, indole-diterpene (IDT) mycotoxins that are potent tremorgens in mammals. The geranylgeranyl diphosphate (GGPP) synthase idtG is proposed to catalyze the first step in IDT biosynthesis via catalysis of a series of iterative condensations of isopentenyl diphosphate (IPP) with dimethylallyl diphosphate (DMAPP), geranyl diphosphate (GPP), and farnesyl diphosphate (FPP), to form GGPP. Condensation of indole-3-glycerol phosphate with GGPP by the prenyltransferase idtC then forms 3-geranylgeranylindole (3-GGI). Epoxidation of the two terminal alkenes of the geranylgeranyl moiety by the FAD-dependent monooxygenase idtM, and cyclization by the terpene cyclase idtB then leads to the production of paspaline. The cytochrome P450 monooxygenase idtP then catalyzes oxidative elimination of the pendant methyl group at C-12 of paspaline and generates the C-10 ketone to yield 13-desoxypaxilline. The cytochrome P450 monooxygenase idtQ may catalyze the C-13 oxidation of 13-desoxypaxilline to afford paxilline. Considering that both paspalicine and paxilline were detected in C.paspali, idtQ also catalyzes the formation of paspalinine from 13-desoxypaxilline via paspalicine as an intermediate. Finally, the alpha-prenyltransferase idtF prenylates paspalinine at the C-20 or the C-21 positions to yield paspalitrems A and C, respectively. The hydroxylation of paspalitrem A at C-32 by a still unknown oxidase affords paspalitrem B. In Claviceps paspali (Rye ergot fungus), this protein is FAD-dependent monooxygenase idtM.